Consider the following 163-residue polypeptide: Lipoprotein signal peptidase (163 aa).

The next 4 membrane-spanning stretches (helical) occupy residues 9-29, 42-62, 67-87, and 93-113; these read AWPW…SKYL, ILPF…SFLG, WQII…ILWL, and SEIM…GNFI. Catalysis depends on residues D123 and D141. A helical membrane pass occupies residues 137–157; that stretch reads FNVADSAICVGVFLLIVHMLL.

This sequence belongs to the peptidase A8 family.

It is found in the cell inner membrane. The catalysed reaction is Release of signal peptides from bacterial membrane prolipoproteins. Hydrolyzes -Xaa-Yaa-Zaa-|-(S,diacylglyceryl)Cys-, in which Xaa is hydrophobic (preferably Leu), and Yaa (Ala or Ser) and Zaa (Gly or Ala) have small, neutral side chains.. The protein operates within protein modification; lipoprotein biosynthesis (signal peptide cleavage). Its function is as follows. This protein specifically catalyzes the removal of signal peptides from prolipoproteins. This Coxiella burnetii (strain RSA 331 / Henzerling II) protein is Lipoprotein signal peptidase.